Here is a 300-residue protein sequence, read N- to C-terminus: MATTKKNEDVEFVRTGYGKDMVKVLHIQRDGKYHSIKEVATSVQLTLSSKQDYVYGDNSDIIPTDTIKNTVHVLAKFKGIKSIEVFAMNICEHFLSSFNHVVRVHVYVEEVPWKRLEKNGVQHVHAFIHTPTGTHFCEVEQRRSGLPVIHSGIKDLKVLKTTQSGFEGFIKDQFTTLPEVKDRCFATQVYCKWRYQHSQDVDFEATWDIVRDTVLEKFAGPYDKGEYSPSVQKTLYDIQVLTLSRVPQIEDMEISLPNIHYFNIDMSKMGLINKEEVLLPLDNPYGKITGTVKRKLSSRL.

Residue alanine 2 is modified to N-acetylalanine. Residues lysine 6 and lysine 19 each carry the N6-acetyllysine; alternate modification. N6-succinyllysine; alternate is present on residues lysine 6 and lysine 19. The Charge relay system role is filled by lysine 19. Lysine 23 and lysine 32 each carry N6-acetyllysine. Phosphoserine is present on residues serine 35 and serine 59. The active-site Charge relay system is threonine 64. Residues threonine 64 and aspartate 65 each coordinate urate. Residues lysine 114, lysine 118, and lysine 160 each carry the N6-acetyllysine modification. Phenylalanine 166 lines the urate pocket. N6-acetyllysine occurs at positions 171 and 181. Residue arginine 183 coordinates urate. Lysine 217 and lysine 224 each carry N6-acetyllysine; alternate. Lysine 217 and lysine 224 each carry N6-succinyllysine; alternate. At serine 228 the chain carries Phosphoserine. 3 residues coordinate urate: valine 231, glutamine 232, and asparagine 258. Histidine 260 (charge relay system) is an active-site residue. Residue lysine 274 is modified to N6-acetyllysine. The residue at position 285 (tyrosine 285) is a Phosphotyrosine. Positions 298–300 (SRL) match the Microbody targeting signal motif.

The protein belongs to the uricase family.

The protein resides in the peroxisome. It catalyses the reaction urate + O2 + H2O = 5-hydroxyisourate + H2O2. The protein operates within purine metabolism; urate degradation; (S)-allantoin from urate: step 1/3. Functionally, catalyzes the oxidation of uric acid to 5-hydroxyisourate, which is further processed to form (S)-allantoin. The protein is Uricase (UOX) of Oryctolagus cuniculus (Rabbit).